Consider the following 259-residue polypeptide: UPF0246 protein NGK_0633 (259 aa).

This sequence belongs to the UPF0246 family.

The sequence is that of UPF0246 protein NGK_0633 from Neisseria gonorrhoeae (strain NCCP11945).